The chain runs to 130 residues: Small ribosomal subunit protein uS9 (130 aa).

It belongs to the universal ribosomal protein uS9 family.

The protein is Small ribosomal subunit protein uS9 of Vibrio vulnificus (strain CMCP6).